We begin with the raw amino-acid sequence, 210 residues long: 3-demethoxyubiquinol 3-hydroxylase (210 aa).

The Fe cation site is built by Glu-59, Glu-89, His-92, Glu-141, Glu-173, and His-176.

It belongs to the COQ7 family. The cofactor is Fe cation.

The protein localises to the cell membrane. The catalysed reaction is a 5-methoxy-2-methyl-3-(all-trans-polyprenyl)benzene-1,4-diol + AH2 + O2 = a 3-demethylubiquinol + A + H2O. It functions in the pathway cofactor biosynthesis; ubiquinone biosynthesis. In terms of biological role, catalyzes the hydroxylation of 2-nonaprenyl-3-methyl-6-methoxy-1,4-benzoquinol during ubiquinone biosynthesis. This is 3-demethoxyubiquinol 3-hydroxylase from Albidiferax ferrireducens (strain ATCC BAA-621 / DSM 15236 / T118) (Rhodoferax ferrireducens).